Reading from the N-terminus, the 239-residue chain is Serine protease SplF (239 aa).

Positions 1-36 (MNKNIIIKSIAALTILTSITGVGTTVVDGIQQTAKA) are cleaved as a signal peptide. Residues His75, Asp114, and Ser192 each act as charge relay system in the active site.

This sequence belongs to the peptidase S1B family.

The protein resides in the secreted. In Staphylococcus aureus (strain JH9), this protein is Serine protease SplF (splF).